A 503-amino-acid chain; its full sequence is Cytochrome P450 3A17 (503 aa).

Cysteine 442 provides a ligand contact to heme.

It belongs to the cytochrome P450 family. The cofactor is heme.

It is found in the endoplasmic reticulum membrane. The protein localises to the microsome membrane. The enzyme catalyses an organic molecule + reduced [NADPH--hemoprotein reductase] + O2 = an alcohol + oxidized [NADPH--hemoprotein reductase] + H2O + H(+). Cytochromes P450 are a group of heme-thiolate monooxygenases. In liver microsomes, this enzyme is involved in an NADPH-dependent electron transport pathway. It oxidizes a variety of structurally unrelated compounds, including steroids, fatty acids, and xenobiotics. This chain is Cytochrome P450 3A17 (CYP3A17), found in Cavia porcellus (Guinea pig).